Consider the following 206-residue polypeptide: Ras-related protein ralB-A (206 aa).

21–28 (GSGGVGKS) contacts GTP. Positions 43–51 (YEPTKADSY) match the Effector region motif. Residues 68–72 (DTAGQ) and 128–131 (NKSD) contribute to the GTP site. Residues 180 to 189 (KMSENKDKNG) show a composition bias toward basic and acidic residues. The segment at 180-206 (KMSENKDKNGKKSGKSKKGFKQRCCLL) is disordered. Residues 190–200 (KKSGKSKKGFK) show a composition bias toward basic residues. A Cysteine methyl ester modification is found at Cys-203. Cys-203 is lipidated: S-geranylgeranyl cysteine. A propeptide spans 204 to 206 (CLL) (removed in mature form).

Belongs to the small GTPase superfamily. Ras family. As to quaternary structure, interacts with ralbp1 and rap1gds1. As to expression, weakly expressed in adult tissues and highest levels were found in heart, brain and testes.

The protein resides in the cell membrane. It is found in the midbody. The catalysed reaction is GTP + H2O = GDP + phosphate + H(+). Functionally, multifunctional GTPase involved in a variety of cellular processes including gene expression, cell migration, cell proliferation, oncogenic transformation and membrane trafficking. Accomplishes its multiple functions by interacting with distinct downstream effectors. Acts as a GTP sensor for GTP-dependent exocytosis of dense core vesicles. Required both to stabilize the assembly of the exocyst complex and to localize functional exocyst complexes to the leading edge of migrating cells. Required for suppression of apoptosis. In late stages of cytokinesis, upon completion of the bridge formation between dividing cells, mediates exocyst recruitment to the midbody to drive abscission. Regulates the actin cytoskeleton to play a role in gastrulation or neurulation. During the cleavage stages, the GTP-bound form induces a cortical reaction that affects the localization of pigment granules. Activated by the FGF pathway via ras and ral-GDS, but independently of raf. Directs ralbp1 to the plasma membrane. Involved in ligand-dependent receptor mediated endocytosis of the EGF and insulin receptors. This chain is Ras-related protein ralB-A (ralb-a), found in Xenopus laevis (African clawed frog).